The sequence spans 438 residues: MPYFPAVDKVRYEGPDSDSPLAFRHYDADKLILGKPMREHLRMAACYWHTFVWPGADMFGVGTFKRPWQGSGDPLELAIGKAETAFEFFSKLGIDYYSFHDTDVAPEGSSLKEYRNNFAQMIDQLERHQEQTGIKLLWGTANCFSNPRFAAGAASNPDPEVFAYAATQVFSAMNATQRLKGANYVLWGGREGYETLLNTDLRQEREQLGRFMRMVVEHKHKIGFKGDLLIEPKPQEPTKHQYDYDSATVFGFLQQYGLEKEIKVNIEANHATLAGHSFHHEIATAVSLGIFGSIDANRGDPQNGWDTDQFPNSVEEMTLATYEILKAGGFTNGGYNFDSKVRRQSLDEVDLFHGHVAAMDVLALALERAAAMVQNDKLQQFKDQRYAGWQQPFGKSLLAGEFSLESLAKHAFDKDLNPQAVSGRQELLEGVVNRFIYF.

Catalysis depends on residues His100 and Asp103. Mg(2+) is bound by residues Glu231, Glu267, His270, Asp295, Asp306, Asp308, and Asp338.

Belongs to the xylose isomerase family. Homotetramer. Mg(2+) serves as cofactor.

It is found in the cytoplasm. It catalyses the reaction alpha-D-xylose = alpha-D-xylulofuranose. This is Xylose isomerase from Pseudomonas savastanoi pv. phaseolicola (strain 1448A / Race 6) (Pseudomonas syringae pv. phaseolicola (strain 1448A / Race 6)).